A 299-amino-acid polypeptide reads, in one-letter code: uncharacterized protein (299 aa).

8 consecutive transmembrane segments (helical) span residues 13 to 33 (ILFL…LHFM), 36 to 56 (AFVI…FLML), 79 to 99 (SFGI…VIII), 112 to 132 (TAIG…ISVI), 151 to 171 (ITSE…LFFI), 201 to 221 (FLIL…VILV), 241 to 261 (YVIL…MLLS), and 267 to 287 (PPGP…FLII).

The protein belongs to the ABC-3 integral membrane protein family.

The protein resides in the plastid. The protein localises to the cyanelle membrane. This is an uncharacterized protein from Cyanophora paradoxa.